Reading from the N-terminus, the 440-residue chain is MAVKLGTLLLALALGLAQPASARRKLLVFLLDGFRSDYISDEALESLPGFKEIVSRGVKVDYLTPDFPSLSYPNYYTLMTGRHCEVHQMIGNYMWDPTTNKSFDIGVNKDSLMPLWWNGSEPLWVTLTKAKRKVYMYYWPGCEVEILGVRPTYCLEYKNVPTDINFANAVSDALDSFKSGRADLAAIYHERIDVEGHHYGPASPQRKDALKAVDTVLKYMTKWIQERGLQDRLNVIIFSDHGMTDIFWMDKVIELNKYISLNDLQQAKDRGPVVSLWPAPGKHSEIYNKLSTVEHMTVYEKEAIPSRFYYKKGKFVSPLTLVADEGWFITENREMLPFWMNSTGRGNGWQRGWHGYDNELMDMRGIFLAFGPDFKSNFRAAPIRSVDVYNVMCNVVGITPLPNNGSWSRVMCMLKGRAGTTPPVQPSHCALALILLFLLA.

The N-terminal stretch at 1 to 22 (MAVKLGTLLLALALGLAQPASA) is a signal peptide. The substrate site is built by Asp32, Ser71, and Asn92. Zn(2+) is bound by residues Asp32 and Ser71. Ser71 acts as the Nucleophile in catalysis. A Phosphoserine modification is found at Ser71. N-linked (GlcNAc...) asparagine glycans are attached at residues Asn100 and Asn118. Residues Cys142 and Cys154 are joined by a disulfide bond. Asp193 lines the substrate pocket. Residues Asp193, His197, Asp240, and His241 each contribute to the Zn(2+) site. His241 is a substrate binding site. N-linked (GlcNAc...) asparagine glycosylation is present at Asn341. His354 contributes to the substrate binding site. A Zn(2+)-binding site is contributed by His354. An N-linked (GlcNAc...) asparagine glycan is attached at Asn404. A lipid anchor (GPI-anchor amidated alanine) is attached at Ala418. A propeptide spans 419–440 (GTTPPVQPSHCALALILLFLLA) (removed in mature form).

This sequence belongs to the nucleotide pyrophosphatase/phosphodiesterase family. In terms of assembly, homodimer; disulfide-linked. Homotetramer. Requires Zn(2+) as cofactor.

The protein localises to the cell membrane. The catalysed reaction is sn-glycerol 3-phosphocholine + H2O = phosphocholine + glycerol + H(+). It carries out the reaction a 1-acyl-sn-glycero-3-phosphocholine + H2O = a 1-acyl-sn-glycerol + phosphocholine + H(+). It catalyses the reaction a 1-O-alkyl-sn-glycero-3-phosphocholine + H2O = a 1-O-alkyl-sn-glycerol + phosphocholine + H(+). The enzyme catalyses 1-dodecanoyl-sn-glycero-3-phosphocholine + H2O = 1-dodecanoyl-sn-glycerol + phosphocholine + H(+). The catalysed reaction is 1-hexadecanoyl-sn-glycero-3-phosphocholine + H2O = 1-hexadecanoyl-sn-glycerol + phosphocholine + H(+). It carries out the reaction 1-(5Z,8Z,11Z,14Z-eicosatetraenoyl)-sn-glycero-3-phosphocholine + H2O = 1-(5Z,8Z,11Z,14Z-eicosatetraenoyl)-sn-glycerol + phosphocholine + H(+). It catalyses the reaction 1-tetradecanoyl-sn-glycero-3-phosphocholine + H2O = 1-tetradecanoyl-sn-glycerol + phosphocholine + H(+). The enzyme catalyses sphing-4-enine-phosphocholine + H2O = sphing-4-enine + phosphocholine + H(+). The catalysed reaction is 1-(9Z-octadecenoyl)-sn-glycero-3-phosphocholine + H2O = 1-(9Z-octadecenoyl)-sn-glycerol + phosphocholine + H(+). It carries out the reaction 1-(9Z,12Z)-octadecadienoyl-sn-glycero-3-phosphocholine + H2O = 1-(9Z,12Z-octadecadienoyl)-sn-glycerol + phosphocholine + H(+). It catalyses the reaction glycero-2-phosphocholine + H2O = phosphocholine + glycerol + H(+). Inhibited by EDTA and EGTA in vitro. In terms of biological role, choline-specific glycerophosphodiesterase that hydrolyzes glycerophosphocholine (GPC) and lysophosphatidylcholine (LPC) and contributes to supplying choline to the cells. Has a preference for LPC with short (12:0 and 14:0) or polyunsaturated (18:2 and 20:4) fatty acids. In vitro, hydrolyzes only choline-containing lysophospholipids, such as sphingosylphosphorylcholine (SPC), platelet-activating factor (PAF) and lysoPAF, but not other lysophospholipids. The sequence is that of Glycerophosphocholine cholinephosphodiesterase ENPP6 from Pongo abelii (Sumatran orangutan).